We begin with the raw amino-acid sequence, 218 residues long: Adapter protein MecA (218 aa).

The protein belongs to the MecA family. As to quaternary structure, homodimer.

Enables the recognition and targeting of unfolded and aggregated proteins to the ClpC protease or to other proteins involved in proteolysis. The polypeptide is Adapter protein MecA (Exiguobacterium sp. (strain ATCC BAA-1283 / AT1b)).